Consider the following 228-residue polypeptide: Translation initiation factor 6 (228 aa).

Functionally, binds to the 50S ribosomal subunit and prevents its association with the 30S ribosomal subunit to form the 70S initiation complex. In Methanocaldococcus jannaschii (strain ATCC 43067 / DSM 2661 / JAL-1 / JCM 10045 / NBRC 100440) (Methanococcus jannaschii), this protein is Translation initiation factor 6.